A 494-amino-acid chain; its full sequence is UPF0371 protein M6_Spy1067 (494 aa).

It belongs to the UPF0371 family.

In Streptococcus pyogenes serotype M6 (strain ATCC BAA-946 / MGAS10394), this protein is UPF0371 protein M6_Spy1067.